The sequence spans 203 residues: N-(5'-phosphoribosyl)anthranilate isomerase (203 aa).

This sequence belongs to the TrpF family.

The enzyme catalyses N-(5-phospho-beta-D-ribosyl)anthranilate = 1-(2-carboxyphenylamino)-1-deoxy-D-ribulose 5-phosphate. It participates in amino-acid biosynthesis; L-tryptophan biosynthesis; L-tryptophan from chorismate: step 3/5. This is N-(5'-phosphoribosyl)anthranilate isomerase from Sulfurihydrogenibium sp. (strain YO3AOP1).